Here is a 227-residue protein sequence, read N- to C-terminus: uncharacterized protein (227 aa).

Helical transmembrane passes span 12–32 (IVLF…YLYA) and 80–100 (IILI…KIPL).

The protein resides in the cell membrane. This is an uncharacterized protein from Methanocaldococcus jannaschii (strain ATCC 43067 / DSM 2661 / JAL-1 / JCM 10045 / NBRC 100440) (Methanococcus jannaschii).